The chain runs to 358 residues: Protein RecA (358 aa).

Position 78-85 (78-85 (GPESGGKT)) interacts with ATP.

The protein belongs to the RecA family.

It is found in the cytoplasm. Its function is as follows. Can catalyze the hydrolysis of ATP in the presence of single-stranded DNA, the ATP-dependent uptake of single-stranded DNA by duplex DNA, and the ATP-dependent hybridization of homologous single-stranded DNAs. It interacts with LexA causing its activation and leading to its autocatalytic cleavage. The chain is Protein RecA from Deinococcus geothermalis (strain DSM 11300 / CIP 105573 / AG-3a).